Consider the following 154-residue polypeptide: 17.4 kDa class I heat shock protein (154 aa).

The 115-residue stretch at 40-154 folds into the sHSP domain; that stretch reads DAAAFAGARI…PDVKSIQITG (115 aa).

Belongs to the small heat shock protein (HSP20) family. May form oligomeric structures.

The protein resides in the cytoplasm. The polypeptide is 17.4 kDa class I heat shock protein (HSP17.4) (Oryza sativa subsp. japonica (Rice)).